Consider the following 373-residue polypeptide: Queuine tRNA-ribosyltransferase (373 aa).

Asp-93 (proton acceptor) is an active-site residue. Substrate contacts are provided by residues 93 to 97, Asp-147, Gln-190, and Gly-219; that span reads DSGGF. The interval 250-256 is RNA binding; sequence GVGEPVD. The active-site Nucleophile is the Asp-269. An RNA binding; important for wobble base 34 recognition region spans residues 274–278; it reads TRLAR. Zn(2+) is bound by residues Cys-307, Cys-309, Cys-312, and His-338.

It belongs to the queuine tRNA-ribosyltransferase family. In terms of assembly, homodimer. Within each dimer, one monomer is responsible for RNA recognition and catalysis, while the other monomer binds to the replacement base PreQ1. Requires Zn(2+) as cofactor.

The catalysed reaction is 7-aminomethyl-7-carbaguanine + guanosine(34) in tRNA = 7-aminomethyl-7-carbaguanosine(34) in tRNA + guanine. Its pathway is tRNA modification; tRNA-queuosine biosynthesis. Catalyzes the base-exchange of a guanine (G) residue with the queuine precursor 7-aminomethyl-7-deazaguanine (PreQ1) at position 34 (anticodon wobble position) in tRNAs with GU(N) anticodons (tRNA-Asp, -Asn, -His and -Tyr). Catalysis occurs through a double-displacement mechanism. The nucleophile active site attacks the C1' of nucleotide 34 to detach the guanine base from the RNA, forming a covalent enzyme-RNA intermediate. The proton acceptor active site deprotonates the incoming PreQ1, allowing a nucleophilic attack on the C1' of the ribose to form the product. After dissociation, two additional enzymatic reactions on the tRNA convert PreQ1 to queuine (Q), resulting in the hypermodified nucleoside queuosine (7-(((4,5-cis-dihydroxy-2-cyclopenten-1-yl)amino)methyl)-7-deazaguanosine). The protein is Queuine tRNA-ribosyltransferase of Fusobacterium nucleatum subsp. nucleatum (strain ATCC 25586 / DSM 15643 / BCRC 10681 / CIP 101130 / JCM 8532 / KCTC 2640 / LMG 13131 / VPI 4355).